Here is a 210-residue protein sequence, read N- to C-terminus: MPDRTAAPSYPFVYLASQSPRRRELLDQLGVRYALLAPTPDEDAEALEAELPGEAPDHYVLRVCVAKAEAARARLVASGKPAAPVLVADTTVTLDGAILGKPADAADALAMLARLAGRTHDVLTALAVIDATGELMPPALSRSAVRFAPATRDALARYVETGEPFGKAGAYAIQGRAAEFVERIDGSHSGIMGLPLFEAAALLRAAHVAF.

Catalysis depends on Asp-89, which acts as the Proton acceptor.

The protein belongs to the Maf family. YhdE subfamily. Requires a divalent metal cation as cofactor.

The protein resides in the cytoplasm. It catalyses the reaction dTTP + H2O = dTMP + diphosphate + H(+). It carries out the reaction UTP + H2O = UMP + diphosphate + H(+). Nucleoside triphosphate pyrophosphatase that hydrolyzes dTTP and UTP. May have a dual role in cell division arrest and in preventing the incorporation of modified nucleotides into cellular nucleic acids. In Burkholderia thailandensis (strain ATCC 700388 / DSM 13276 / CCUG 48851 / CIP 106301 / E264), this protein is dTTP/UTP pyrophosphatase.